The sequence spans 1019 residues: Serine/threonine-protein kinase 31 (1019 aa).

A Tudor domain is found at 78–137; sequence NLDPNKIYGGLFSEDQCWYRCKVLKIISVEKCLVRYIDYGNTEILNRSDIVEIPLELQFS. Positions 298-355 form a coiled coil; that stretch reads EKIKQDQKLIEENEKLKTEKDALLESYKALELKVEQIAQELQQEKAAAVDLTNHLEYT. One can recognise a Protein kinase domain in the interval 710–1019; that stretch reads IGLLKYMNSG…TRNGEANFDC (310 aa). ATP-binding positions include 716 to 724 and Lys737; that span reads MNSGGLLTM.

It belongs to the protein kinase superfamily. Ser/Thr protein kinase family. As to expression, testis specific.

It carries out the reaction L-seryl-[protein] + ATP = O-phospho-L-seryl-[protein] + ADP + H(+). The enzyme catalyses L-threonyl-[protein] + ATP = O-phospho-L-threonyl-[protein] + ADP + H(+). The protein is Serine/threonine-protein kinase 31 (STK31) of Homo sapiens (Human).